Reading from the N-terminus, the 173-residue chain is uncharacterized protein (173 aa).

The signal sequence occupies residues 1–25 (MPVVTAVGRRRGFAMPWVSTARSGA).

This is an uncharacterized protein from Mycobacterium bovis (strain ATCC BAA-935 / AF2122/97).